The following is a 400-amino-acid chain: tRNA (guanine-N(7)-)-methyltransferase (400 aa).

The S-adenosyl-L-methionine site is built by glutamate 124, glutamate 149, and aspartate 176. Substrate is bound at residue aspartate 232.

Belongs to the class I-like SAM-binding methyltransferase superfamily. TrmB family.

The catalysed reaction is guanosine(46) in tRNA + S-adenosyl-L-methionine = N(7)-methylguanosine(46) in tRNA + S-adenosyl-L-homocysteine. The protein operates within tRNA modification; N(7)-methylguanine-tRNA biosynthesis. Catalyzes the formation of N(7)-methylguanine at position 46 (m7G46) in tRNA. The chain is tRNA (guanine-N(7)-)-methyltransferase from Helicobacter pylori (strain J99 / ATCC 700824) (Campylobacter pylori J99).